The following is a 323-amino-acid chain: 2-methylene-furan-3-one reductase (323 aa).

NADP(+)-binding positions include lysine 59, 174 to 175, 197 to 200, tyrosine 216, isoleucine 254, 265 to 267, and 312 to 313; these read GV, STKK, FVL, and RA. Position 59 (lysine 59) interacts with substrate.

Belongs to the zinc-containing alcohol dehydrogenase family. Quinone oxidoreductase subfamily. In terms of assembly, monomer. The N-terminus is blocked. In terms of tissue distribution, expressed in parenchyma tissues of red fruits. Not found in vascular tissues. Also detected in the achenes.

The enzyme catalyses 4-hydroxy-2,5-dimethyl-furan-3(2H)-one + NADP(+) = 4-hydroxy-5-methyl-2-methylenefuran-3(2H)-one + NADPH + H(+). In terms of biological role, enone oxidoreductase involved in the biosynthesis of 4-hydroxy-2,5-dimethyl-3(2H)-furanone (HDMF or furaneol), the key flavor compound in strawberries. Can use both NADH and NADPH as the electron donor. This is 2-methylene-furan-3-one reductase (EO) from Fragaria ananassa (Strawberry).